A 363-amino-acid polypeptide reads, in one-letter code: DNA replication and repair protein RecF (363 aa).

Residue 30–37 (GPNGSGKT) participates in ATP binding.

The protein belongs to the RecF family.

Its subcellular location is the cytoplasm. Its function is as follows. The RecF protein is involved in DNA metabolism; it is required for DNA replication and normal SOS inducibility. RecF binds preferentially to single-stranded, linear DNA. It also seems to bind ATP. The sequence is that of DNA replication and repair protein RecF from Chlorobium limicola (strain DSM 245 / NBRC 103803 / 6330).